Here is a 290-residue protein sequence, read N- to C-terminus: Glycine--tRNA ligase alpha subunit (290 aa).

Belongs to the class-II aminoacyl-tRNA synthetase family. As to quaternary structure, tetramer of two alpha and two beta subunits.

It localises to the cytoplasm. The enzyme catalyses tRNA(Gly) + glycine + ATP = glycyl-tRNA(Gly) + AMP + diphosphate. The protein is Glycine--tRNA ligase alpha subunit of Desulfotalea psychrophila (strain LSv54 / DSM 12343).